A 98-amino-acid polypeptide reads, in one-letter code: Large ribosomal subunit protein uL23 (98 aa).

It belongs to the universal ribosomal protein uL23 family. As to quaternary structure, part of the 50S ribosomal subunit. Contacts protein L29, and trigger factor when it is bound to the ribosome.

Functionally, one of the early assembly proteins it binds 23S rRNA. One of the proteins that surrounds the polypeptide exit tunnel on the outside of the ribosome. Forms the main docking site for trigger factor binding to the ribosome. The protein is Large ribosomal subunit protein uL23 of Jannaschia sp. (strain CCS1).